A 271-amino-acid chain; its full sequence is Mannosyl-3-phosphoglycerate phosphatase (271 aa).

The Nucleophile role is filled by aspartate 13. Positions 13, 15, and 214 each coordinate Mg(2+).

The protein belongs to the HAD-like hydrolase superfamily. MPGP family. It depends on Mg(2+) as a cofactor.

The protein resides in the cytoplasm. It carries out the reaction 2-O-(alpha-D-mannosyl)-3-phosphoglycerate + H2O = (2R)-2-O-(alpha-D-mannosyl)-glycerate + phosphate. This Escherichia coli (strain SMS-3-5 / SECEC) protein is Mannosyl-3-phosphoglycerate phosphatase.